The chain runs to 23 residues: Nephrotoxin PsTX-115 (23 aa).

The protein localises to the secreted. The protein resides in the nematocyst. Nephrotoxin. When injected intravenously in rats, causes severe destructive glomerular changes. At 24 hours post-injection partial disruption of the glomerular basement membrane, massive thrombus formation in glomerular capillaries, severe mesangiolysis and infiltrating cells were observed in the majority of glomeruli. The chain is Nephrotoxin PsTX-115 from Phyllodiscus semoni (Night anemone).